A 502-amino-acid chain; its full sequence is Glycerol kinase (502 aa).

Residue Thr14 participates in ADP binding. Residues Thr14, Thr15, and Ser16 each contribute to the ATP site. Residue Thr14 coordinates sn-glycerol 3-phosphate. Arg18 lines the ADP pocket. Positions 84, 85, and 136 each coordinate sn-glycerol 3-phosphate. Glycerol is bound by residues Arg84, Glu85, and Tyr136. His232 is modified (phosphohistidine; by HPr). Sn-glycerol 3-phosphate is bound at residue Asp246. Positions 246 and 247 each coordinate glycerol. ADP contacts are provided by Thr268 and Gly311. Thr268, Gly311, Gln315, and Gly412 together coordinate ATP. Residues Gly412 and Asn416 each contribute to the ADP site.

It belongs to the FGGY kinase family. As to quaternary structure, homotetramer and homodimer (in equilibrium). Post-translationally, the phosphoenolpyruvate-dependent sugar phosphotransferase system (PTS), including enzyme I, and histidine-containing protein (HPr) are required for the phosphorylation, which leads to the activation of the enzyme.

The enzyme catalyses glycerol + ATP = sn-glycerol 3-phosphate + ADP + H(+). It participates in polyol metabolism; glycerol degradation via glycerol kinase pathway; sn-glycerol 3-phosphate from glycerol: step 1/1. Activated by phosphorylation and inhibited by fructose 1,6-bisphosphate (FBP). Key enzyme in the regulation of glycerol uptake and metabolism. Catalyzes the phosphorylation of glycerol to yield sn-glycerol 3-phosphate. The chain is Glycerol kinase from Streptococcus sanguinis (strain SK36).